The chain runs to 265 residues: (-)-isopiperitenol/(-)-carveol dehydrogenase, mitochondrial (265 aa).

A mitochondrion-targeting transit peptide spans 1 to 30; sequence MASVKKLAGKVAIVTGGASGIGEVTARLFA. 13 to 38 contacts NAD(+); it reads IVTGGASGIGEVTARLFAERGARAVV. Serine 147 contacts substrate. Tyrosine 160 (proton acceptor) is an active-site residue.

It belongs to the short-chain dehydrogenases/reductases (SDR) family. As to quaternary structure, homodimer and homotetramer. Peltate glandular trichomes.

The protein resides in the mitochondrion. The enzyme catalyses (1S,6R)-isopiperitenol + NAD(+) = (6R)-isopiperitenone + NADH + H(+). The catalysed reaction is (1S,5R)-carveol + NADP(+) = (R)-carvone + NADPH + H(+). Its function is as follows. Involved in the biosynthesis of menthol and related monoterpenes in leaves. Can use (-)-trans-carveol and, with a lower relative velocity, (-)-trans-isopiperitenol, (+)-neomenthol, (+)-neoisomenthol and (-)-cis-isopiperitenol as substrates, but not (-)-cis-carvenol, (-)-menthol, (+)-isomenthol, 7-hydroxy-limonene, (-)-isopiperitenone or (-)-carvone. The polypeptide is (-)-isopiperitenol/(-)-carveol dehydrogenase, mitochondrial (Mentha piperita (Peppermint)).